Here is a 67-residue protein sequence, read N- to C-terminus: Cold shock protein (67 aa).

The CSD domain maps to 4-64; it reads GTVKWFNAEK…GAKGPQATGV (61 aa).

The protein localises to the cytoplasm. The chain is Cold shock protein (csp) from Arthrobacter globiformis.